The following is a 185-amino-acid chain: Protein GrpE (185 aa).

Over residues 1–11 (MENTQENPTDQ) the composition is skewed to polar residues. The segment at 1–38 (MENTQENPTDQTTEETGREAQAAEPAAQAAENAAPAAE) is disordered. Residues 19–38 (EAQAAEPAAQAAENAAPAAE) are compositionally biased toward low complexity.

Belongs to the GrpE family. In terms of assembly, homodimer.

The protein localises to the cytoplasm. In terms of biological role, participates actively in the response to hyperosmotic and heat shock by preventing the aggregation of stress-denatured proteins, in association with DnaK and GrpE. It is the nucleotide exchange factor for DnaK and may function as a thermosensor. Unfolded proteins bind initially to DnaJ; upon interaction with the DnaJ-bound protein, DnaK hydrolyzes its bound ATP, resulting in the formation of a stable complex. GrpE releases ADP from DnaK; ATP binding to DnaK triggers the release of the substrate protein, thus completing the reaction cycle. Several rounds of ATP-dependent interactions between DnaJ, DnaK and GrpE are required for fully efficient folding. This is Protein GrpE from Burkholderia mallei (strain NCTC 10247).